The following is a 293-amino-acid chain: Protein nud-2 (293 aa).

Residues 36–147 are a coiled coil; the sequence is EIEKMMDSEL…EKIAMLESEL (112 aa). Residues 239–293 form a required for interaction with unc-83 isoform c region; sequence KSQRVSTGTGAGACINRIVKDLMTKVERLDSILSTIRVSNNSSNNNSSHLTTTRA.

This sequence belongs to the nudE family. In terms of assembly, component of a dynein-regulating complex composed of at least lis-1 and nud-2. Interacts with lis-1; the interaction is direct. Interacts (via C-terminus) with unc-83; the interaction is direct, and is required for recruitment of nud-2 to the nuclear envelope. As to expression, expressed in ventral cord neurons, the pharynx, seam cells of the hypodermis and in vulval muscle cells.

It localises to the nucleus envelope. Part of a complex with lis-1, which is recruited to the nuclear envelope by unc-83, where, in turn, it recruits dynein to the nuclear surface and regulates nuclear migration in hypodermal precursor cells. Plays a role in GABAergic synaptic vesicle localization in the ventral nerve cord. In Caenorhabditis elegans, this protein is Protein nud-2.